The primary structure comprises 479 residues: Nuclear envelope integral membrane protein 2 (479 aa).

The N-terminal stretch at 1 to 23 (MEKLAAFILVLTLLCAYWQSAEG) is a signal peptide. A glycan (N-linked (GlcNAc...) asparagine) is linked at Asn69. 5 helical membrane passes run 172-192 (LFFYTTGVSLGIIATFVFLTL), 203-223 (LFLVLLGAGSGLSYMGIQRVL), 233-253 (HWMELLAYVLISGLFSFAVCY), 276-296 (IVLLYYGITFPPAYFVLVAVL), and 301-321 (ILPLAWSLLMGICSLFYSFLA). Asn414 carries an N-linked (GlcNAc...) asparagine glycan. Positions 414–479 (NSSSSDTQSH…PLDPEDQDFF (66 aa)) are disordered. Over residues 438 to 449 (NSPPVLNNLPSP) the composition is skewed to low complexity. Pro residues predominate over residues 450–470 (TIYPPTICPYPPVTYTPQPEP).

The protein belongs to the NEMP family.

It localises to the nucleus inner membrane. Functionally, contributes to nuclear envelope stiffness in germ cells. Involved in male and female fertility. The sequence is that of Nuclear envelope integral membrane protein 2 from Danio rerio (Zebrafish).